The sequence spans 202 residues: Recombination protein RecR (202 aa).

The C4-type zinc finger occupies 59–74 (CSVCFHLSAEPVCEIC). The 95-residue stretch at 82 to 176 (HTICVVADSR…KVTRIAFGLP (95 aa)) folds into the Toprim domain.

Belongs to the RecR family.

Its function is as follows. May play a role in DNA repair. It seems to be involved in an RecBC-independent recombinational process of DNA repair. It may act with RecF and RecO. The polypeptide is Recombination protein RecR (Thermosynechococcus vestitus (strain NIES-2133 / IAM M-273 / BP-1)).